The primary structure comprises 519 residues: ATP synthase subunit alpha 2 (519 aa).

179-186 (GDRQTGKT) is a binding site for ATP.

The protein belongs to the ATPase alpha/beta chains family. F-type ATPases have 2 components, CF(1) - the catalytic core - and CF(0) - the membrane proton channel. CF(1) has five subunits: alpha(3), beta(3), gamma(1), delta(1), epsilon(1). CF(0) has three main subunits: a(1), b(2) and c(9-12). The alpha and beta chains form an alternating ring which encloses part of the gamma chain. CF(1) is attached to CF(0) by a central stalk formed by the gamma and epsilon chains, while a peripheral stalk is formed by the delta and b chains.

The protein resides in the cell inner membrane. It carries out the reaction ATP + H2O + 4 H(+)(in) = ADP + phosphate + 5 H(+)(out). In terms of biological role, produces ATP from ADP in the presence of a proton gradient across the membrane. The alpha chain is a regulatory subunit. The chain is ATP synthase subunit alpha 2 from Syntrophus aciditrophicus (strain SB).